The primary structure comprises 349 residues: Probable ethanolamine kinase A (349 aa).

It belongs to the choline/ethanolamine kinase family.

The protein resides in the cytoplasm. It catalyses the reaction ethanolamine + ATP = phosphoethanolamine + ADP + H(+). It participates in phospholipid metabolism; phosphatidylethanolamine biosynthesis; phosphatidylethanolamine from ethanolamine: step 1/3. Its function is as follows. Highly specific for ethanolamine phosphorylation. May be a rate-controlling step in phosphatidylethanolamine biosynthesis. The sequence is that of Probable ethanolamine kinase A (etnkA) from Dictyostelium discoideum (Social amoeba).